The sequence spans 622 residues: tRNA uridine 5-carboxymethylaminomethyl modification enzyme MnmG (622 aa).

10–15 (GGGHAG) contributes to the FAD binding site. An NAD(+)-binding site is contributed by 269–283 (GPRYCPSVEDKIVKF).

It belongs to the MnmG family. As to quaternary structure, homodimer. Heterotetramer of two MnmE and two MnmG subunits. FAD is required as a cofactor.

It is found in the cytoplasm. NAD-binding protein involved in the addition of a carboxymethylaminomethyl (cmnm) group at the wobble position (U34) of certain tRNAs, forming tRNA-cmnm(5)s(2)U34. The chain is tRNA uridine 5-carboxymethylaminomethyl modification enzyme MnmG from Bartonella quintana (strain Toulouse) (Rochalimaea quintana).